A 203-amino-acid chain; its full sequence is Glycerol-3-phosphate acyltransferase (203 aa).

5 consecutive transmembrane segments (helical) span residues 6–26 (LTLAMILTAYLAGSISSAVLV), 56–76 (AAAMVLLFDMLKGAVPAYVAF), 82–102 (AVSLGVIAIAACLGHIFPIFF), 118–138 (APIGADLSLALIATWVIVVLI), and 141–161 (YSSLAAIVTALLAPAYTWYFD).

This sequence belongs to the PlsY family. As to quaternary structure, probably interacts with PlsX.

The protein resides in the cell inner membrane. It carries out the reaction an acyl phosphate + sn-glycerol 3-phosphate = a 1-acyl-sn-glycero-3-phosphate + phosphate. Its pathway is lipid metabolism; phospholipid metabolism. In terms of biological role, catalyzes the transfer of an acyl group from acyl-phosphate (acyl-PO(4)) to glycerol-3-phosphate (G3P) to form lysophosphatidic acid (LPA). This enzyme utilizes acyl-phosphate as fatty acyl donor, but not acyl-CoA or acyl-ACP. This Shewanella loihica (strain ATCC BAA-1088 / PV-4) protein is Glycerol-3-phosphate acyltransferase.